The primary structure comprises 425 residues: Glutamyl-tRNA(Gln) amidotransferase subunit D (425 aa).

The disordered stretch occupies residues Glu-53–Leu-84. Residues Gly-68–Ser-80 show a composition bias toward basic and acidic residues. The region spanning Pro-85–Asn-414 is the Asparaginase/glutaminase domain. Catalysis depends on residues Thr-95, Thr-171, Asp-172, and Lys-248.

Belongs to the asparaginase 1 family. GatD subfamily. Heterodimer of GatD and GatE.

The enzyme catalyses L-glutamyl-tRNA(Gln) + L-glutamine + ATP + H2O = L-glutaminyl-tRNA(Gln) + L-glutamate + ADP + phosphate + H(+). Its function is as follows. Allows the formation of correctly charged Gln-tRNA(Gln) through the transamidation of misacylated Glu-tRNA(Gln) in organisms which lack glutaminyl-tRNA synthetase. The reaction takes place in the presence of glutamine and ATP through an activated gamma-phospho-Glu-tRNA(Gln). The GatDE system is specific for glutamate and does not act on aspartate. The sequence is that of Glutamyl-tRNA(Gln) amidotransferase subunit D from Methanosarcina mazei (strain ATCC BAA-159 / DSM 3647 / Goe1 / Go1 / JCM 11833 / OCM 88) (Methanosarcina frisia).